The following is a 280-amino-acid chain: Pyrethroid hydrolase (280 aa).

Residues Asp-202 and His-230 each act as charge relay system in the active site. Residues 254 to 280 are disordered; it reads YRQTATKAGPDRPAGADGGRADRADLP.

Belongs to the AB hydrolase superfamily. As to quaternary structure, monomer.

It catalyses the reaction (-)-trans-permethrin + H2O = (3-phenoxyphenyl)methanol + (1S,3R)-3-(2,2-dichlorovinyl)-2,2-dimethylcyclopropanecarboxylate + H(+). Catalyzes the hydrolysis of pyrethroids pesticides. Catalyzes the hydrolysis of cypermethrin to equimolar amounts of cyano-3-phenoxybenzyl alcohol and 2,2-dimethyl-3-(2,2-dichlorovinyl)-cyclopropanecarboxylic acid. Hydrolyzes cis-permethrin at approximately equal rate to trans-permethrin. In Sphingobium wenxiniae (strain DSM 21828 / CGMCC 1.7748 / JZ-1), this protein is Pyrethroid hydrolase (pytH).